Reading from the N-terminus, the 267-residue chain is tRNA-cytidine(32) 2-sulfurtransferase 1 (267 aa).

The short motif at 42–47 (SGGKDS) is the PP-loop motif element. C117, C120, and C208 together coordinate [4Fe-4S] cluster.

The protein belongs to the TtcA family. As to quaternary structure, homodimer. Mg(2+) is required as a cofactor. It depends on [4Fe-4S] cluster as a cofactor.

It is found in the cytoplasm. The catalysed reaction is cytidine(32) in tRNA + S-sulfanyl-L-cysteinyl-[cysteine desulfurase] + AH2 + ATP = 2-thiocytidine(32) in tRNA + L-cysteinyl-[cysteine desulfurase] + A + AMP + diphosphate + H(+). Its pathway is tRNA modification. Catalyzes the ATP-dependent 2-thiolation of cytidine in position 32 of tRNA, to form 2-thiocytidine (s(2)C32). The sulfur atoms are provided by the cysteine/cysteine desulfurase (IscS) system. This chain is tRNA-cytidine(32) 2-sulfurtransferase 1, found in Francisella tularensis subsp. novicida (strain U112).